A 60-amino-acid polypeptide reads, in one-letter code: Large ribosomal subunit protein bL32 (60 aa).

The interval 1-23 (MAVPRNRHSNARKNIRRSHHAKK) is disordered.

It belongs to the bacterial ribosomal protein bL32 family.

This Chlamydia caviae (strain ATCC VR-813 / DSM 19441 / 03DC25 / GPIC) (Chlamydophila caviae) protein is Large ribosomal subunit protein bL32.